The chain runs to 466 residues: E3 SUMO-protein ligase TRIM60 (466 aa).

The segment at 15–56 adopts an RING-type zinc-finger fold; that stretch reads CYICSDFMEDPVTSRCGHNFCFACLRLLWDDLQGNIFCPVCQ. Residues 91-132 form a B box-type zinc finger; sequence EEHTVCPKHDQPLVLFCVRDRDVLCTQCSLSVEHQGHYTCPI. Zn(2+) contacts are provided by Cys-96, His-99, Cys-118, and His-124. A coiled-coil region spans residues 171-223; sequence LREEAQYQKIEIRYEIGQIKLFLQSEYEAHLNESHMEELRSFSELNGYLETLL. The region spanning 272-462 is the B30.2/SPRY domain; sequence LSLPAQYSGL…LEILTHPTPD (191 aa).

Belongs to the TRIM/RBCC family.

Its function is as follows. E3 SUMO-protein ligase that mediates SUMOylation of TAB2 leading to inhibition of NF-kappa-B and MAPK pathways by suppressing the TRAF6/TAB2/TAK1 complex. This is E3 SUMO-protein ligase TRIM60 (Trim60) from Mus musculus (Mouse).